The chain runs to 400 residues: Enoyl-[acyl-carrier-protein] reductase [NADH] (400 aa).

NAD(+)-binding positions include 48 to 53, 74 to 75, 111 to 112, and 139 to 140; these read GASTGY, FE, DA, and LA. Tyr225 is a substrate binding site. Tyr235 serves as the catalytic Proton donor. Residues Lys244 and 273–275 contribute to the NAD(+) site; that span reads VVT.

This sequence belongs to the TER reductase family. Monomer.

The enzyme catalyses a 2,3-saturated acyl-[ACP] + NAD(+) = a (2E)-enoyl-[ACP] + NADH + H(+). It participates in lipid metabolism; fatty acid biosynthesis. In terms of biological role, involved in the final reduction of the elongation cycle of fatty acid synthesis (FAS II). Catalyzes the reduction of a carbon-carbon double bond in an enoyl moiety that is covalently linked to an acyl carrier protein (ACP). The sequence is that of Enoyl-[acyl-carrier-protein] reductase [NADH] from Burkholderia cenocepacia (strain HI2424).